A 129-amino-acid chain; its full sequence is Small ribosomal subunit protein uS11 (129 aa).

Belongs to the universal ribosomal protein uS11 family. As to quaternary structure, part of the 30S ribosomal subunit. Interacts with proteins S7 and S18. Binds to IF-3.

Its function is as follows. Located on the platform of the 30S subunit, it bridges several disparate RNA helices of the 16S rRNA. Forms part of the Shine-Dalgarno cleft in the 70S ribosome. The protein is Small ribosomal subunit protein uS11 of Erwinia tasmaniensis (strain DSM 17950 / CFBP 7177 / CIP 109463 / NCPPB 4357 / Et1/99).